The chain runs to 129 residues: Large ribosomal subunit protein bL12 (129 aa).

The protein belongs to the bacterial ribosomal protein bL12 family. In terms of assembly, homodimer. Part of the ribosomal stalk of the 50S ribosomal subunit. Forms a multimeric L10(L12)X complex, where L10 forms an elongated spine to which 2 to 4 L12 dimers bind in a sequential fashion. Binds GTP-bound translation factors.

In terms of biological role, forms part of the ribosomal stalk which helps the ribosome interact with GTP-bound translation factors. Is thus essential for accurate translation. The chain is Large ribosomal subunit protein bL12 from Solidesulfovibrio magneticus (strain ATCC 700980 / DSM 13731 / RS-1) (Desulfovibrio magneticus).